The chain runs to 156 residues: Ribosomal RNA large subunit methyltransferase H (156 aa).

S-adenosyl-L-methionine is bound by residues Leu-73, Gly-104, and 123-128 (LSPLTF).

The protein belongs to the RNA methyltransferase RlmH family. Homodimer.

The protein resides in the cytoplasm. It catalyses the reaction pseudouridine(1915) in 23S rRNA + S-adenosyl-L-methionine = N(3)-methylpseudouridine(1915) in 23S rRNA + S-adenosyl-L-homocysteine + H(+). Functionally, specifically methylates the pseudouridine at position 1915 (m3Psi1915) in 23S rRNA. In Thioalkalivibrio sulfidiphilus (strain HL-EbGR7), this protein is Ribosomal RNA large subunit methyltransferase H.